The primary structure comprises 70 residues: MLKIGVMLSIILVLFPLATLQLVAERPAAERYAENKQDLNPDERRNYLVDLGVERTCCTACNIPPCKCCA.

Residues 1-20 form the signal peptide; sequence MLKIGVMLSIILVLFPLATL. The propeptide occupies 21 to 55; sequence QLVAERPAAERYAENKQDLNPDERRNYLVDLGVER.

In terms of tissue distribution, expressed by the venom duct.

The protein resides in the secreted. This chain is Conotoxin ba3a, found in Conus bayani (Bayan's cone).